Consider the following 407-residue polypeptide: Na(+)-translocating NADH-quinone reductase subunit F (407 aa).

Residues 3-23 (IILGVVMFTLIVLALTVMILF) traverse the membrane as a helical segment. Residues 32–126 (GDITVEINED…NLKIELPEEI (95 aa)) enclose the 2Fe-2S ferredoxin-type domain. The [2Fe-2S] cluster site is built by cysteine 69, cysteine 75, cysteine 78, and cysteine 110. The FAD-binding FR-type domain occupies 129–269 (VKKWTCEVIS…SGPFGEFFAK (141 aa)).

It belongs to the NqrF family. In terms of assembly, composed of six subunits; NqrA, NqrB, NqrC, NqrD, NqrE and NqrF. [2Fe-2S] cluster is required as a cofactor. It depends on FAD as a cofactor.

The protein resides in the cell inner membrane. The catalysed reaction is a ubiquinone + n Na(+)(in) + NADH + H(+) = a ubiquinol + n Na(+)(out) + NAD(+). In terms of biological role, NQR complex catalyzes the reduction of ubiquinone-1 to ubiquinol by two successive reactions, coupled with the transport of Na(+) ions from the cytoplasm to the periplasm. The first step is catalyzed by NqrF, which accepts electrons from NADH and reduces ubiquinone-1 to ubisemiquinone by a one-electron transfer pathway. This is Na(+)-translocating NADH-quinone reductase subunit F from Yersinia pseudotuberculosis serotype I (strain IP32953).